A 455-amino-acid chain; its full sequence is Kynureninase (455 aa).

Residues Leu-94, Thr-95, 122 to 125 (FPSD), Asp-208, His-211, and Tyr-233 contribute to the pyridoxal 5'-phosphate site. Lys-234 is modified (N6-(pyridoxal phosphate)lysine). The pyridoxal 5'-phosphate site is built by Trp-275 and Asn-303.

The protein belongs to the kynureninase family. As to quaternary structure, homodimer. Pyridoxal 5'-phosphate serves as cofactor.

Its subcellular location is the cytoplasm. The enzyme catalyses L-kynurenine + H2O = anthranilate + L-alanine + H(+). It carries out the reaction 3-hydroxy-L-kynurenine + H2O = 3-hydroxyanthranilate + L-alanine + H(+). It functions in the pathway amino-acid degradation; L-kynurenine degradation; L-alanine and anthranilate from L-kynurenine: step 1/1. It participates in cofactor biosynthesis; NAD(+) biosynthesis; quinolinate from L-kynurenine: step 2/3. Functionally, catalyzes the cleavage of L-kynurenine (L-Kyn) and L-3-hydroxykynurenine (L-3OHKyn) into anthranilic acid (AA) and 3-hydroxyanthranilic acid (3-OHAA), respectively. The polypeptide is Kynureninase (Vanderwaltozyma polyspora (strain ATCC 22028 / DSM 70294 / BCRC 21397 / CBS 2163 / NBRC 10782 / NRRL Y-8283 / UCD 57-17) (Kluyveromyces polysporus)).